The chain runs to 500 residues: Lysine--tRNA ligase (500 aa).

Glu-410 and Glu-417 together coordinate Mg(2+).

Belongs to the class-II aminoacyl-tRNA synthetase family. In terms of assembly, homodimer. The cofactor is Mg(2+).

It is found in the cytoplasm. The enzyme catalyses tRNA(Lys) + L-lysine + ATP = L-lysyl-tRNA(Lys) + AMP + diphosphate. In Pseudomonas fluorescens (strain ATCC BAA-477 / NRRL B-23932 / Pf-5), this protein is Lysine--tRNA ligase.